Here is a 240-residue protein sequence, read N- to C-terminus: Probable septum site-determining protein MinC (240 aa).

Belongs to the MinC family. Interacts with MinD and FtsZ.

In terms of biological role, cell division inhibitor that blocks the formation of polar Z ring septums. Rapidly oscillates between the poles of the cell to destabilize FtsZ filaments that have formed before they mature into polar Z rings. Prevents FtsZ polymerization. This is Probable septum site-determining protein MinC from Acinetobacter baumannii (strain ATCC 17978 / DSM 105126 / CIP 53.77 / LMG 1025 / NCDC KC755 / 5377).